A 353-amino-acid polypeptide reads, in one-letter code: ATP-dependent kinase YFH7 (353 aa).

An ATP-binding site is contributed by 31 to 39 (GSPGSGKST).

The protein belongs to the YFH7 family.

Functionally, ATP-dependent kinase that could be involved in endoplasmic reticulum membrane assembly. This Saccharomyces cerevisiae (strain RM11-1a) (Baker's yeast) protein is ATP-dependent kinase YFH7 (YFH7).